The following is a 68-amino-acid chain: Tabimmunregulin 1 (68 aa).

Residues 1-26 (MLLKSYVFFLLSLLIVGLFTSRDADA) form the signal peptide. A propeptide spanning residues 27-38 (QYEDLVTGYLRK) is cleaved from the precursor.

As to expression, expressed in salivary glands.

It is found in the secreted. Its function is as follows. Horsefly salivary gland immunosuppressant protein that likely inhibits the host inflammatory response by regulation of anti- and pro-inflammatory cytokines. When tested on mouse splenocytes in the presence of LPS, it increases the secretion of the proinflammatory cytokine interleukin-10 (IL10) and decreases the secretion of the proinflammatory cytokine interferon-gamma (IFNG) in a dose-dependent manner. This is Tabimmunregulin 1 from Tabanus yao (Horsefly).